The sequence spans 746 residues: Zinc finger protein 366 (746 aa).

Residues 1–64 (MQKAMKMVKD…FRYEPSPGDL (64 aa)) are disordered. 11 C2H2-type zinc fingers span residues 250-272 (WQCP…ILGH), 278-300 (HACS…MLTH), 306-328 (HKCQ…MMQH), 334-356 (HNCR…EAKH), 362-384 (NICV…LTTH), 390-412 (YNCS…MMKH), 418-440 (YICS…SLTH), 446-468 (HKCG…VLIH), 474-496 (YQCH…MIVH), 502-524 (FKCK…LHLH), and 530-553 (FKCL…KVKH). Residues 452-746 (GREFTLLANM…MEKQAVLLGI (295 aa)) form an interaction with NRIP1 region. The PXDLS motif lies at 587–591 (PFDLS). The disordered stretch occupies residues 587-689 (PFDLSQKRSA…DHEGSDIDCE (103 aa)). Over residues 613–627 (CQEEEEEAGEEDNCY) the composition is skewed to acidic residues. Residues 675 to 689 (EDRSEDHEGSDIDCE) show a composition bias toward basic and acidic residues.

As to quaternary structure, interacts with ESR1 and NRIP1. Interacts (via PXDLS motif) with CTBP1. Expressed in immature and mature dendritic cells (DCs).

It is found in the nucleus. Its function is as follows. Has transcriptional repression activity. Acts as a corepressor of ESR1; the function seems to involve CTBP1 and histone deacetylases. The chain is Zinc finger protein 366 from Mus musculus (Mouse).